The chain runs to 359 residues: MLFHYLYPLHTEISFFNLFRYITFRTIYGGLTAFLICFLLGPWVINRLSRMQIGQFIQNDGPETHFEKEGTPTMGGILILFSLGVSTLLWADLTNHYILITLLSMLLFGAIGFIDDYLMQVKKRNMGFTARGKFLVQIMAGLVISYLVYLCPDFDTSLSIPFLKNFTPDLGIWYIPFATLVIVGTSNAVNLTDGLDGLAIGPIIIAGVTYMIFAYVASHITIASYLQVKHIASCGEITIVCGILAGAGLGFLWFNAHPAQVFMGDTGSIPLGAILGTIAVITKQEILLLVVGGLFVIEALSVIIQVGYFKLSKGKRVFRMAPLHHHFELKGWPESKVIVRFWIIAITLALISLSTLKIR.

A run of 10 helical transmembrane segments spans residues 26–46 (TIYGGLTAFLICFLLGPWVIN), 73–93 (TMGGILILFSLGVSTLLWADL), 98–118 (ILITLLSMLLFGAIGFIDDYL), 134–154 (FLVQIMAGLVISYLVYLCPDF), 166–186 (FTPDLGIWYIPFATLVIVGTS), 197–217 (GLAIGPIIIAGVTYMIFAYVA), 234–254 (CGEITIVCGILAGAGLGFLWF), 261–281 (VFMGDTGSIPLGAILGTIAVI), 286–306 (ILLLVVGGLFVIEALSVIIQV), and 338–358 (IVRFWIIAITLALISLSTLKI).

The protein belongs to the glycosyltransferase 4 family. MraY subfamily. The cofactor is Mg(2+).

It localises to the cell inner membrane. It catalyses the reaction UDP-N-acetyl-alpha-D-muramoyl-L-alanyl-gamma-D-glutamyl-meso-2,6-diaminopimeloyl-D-alanyl-D-alanine + di-trans,octa-cis-undecaprenyl phosphate = di-trans,octa-cis-undecaprenyl diphospho-N-acetyl-alpha-D-muramoyl-L-alanyl-D-glutamyl-meso-2,6-diaminopimeloyl-D-alanyl-D-alanine + UMP. It participates in cell wall biogenesis; peptidoglycan biosynthesis. Catalyzes the initial step of the lipid cycle reactions in the biosynthesis of the cell wall peptidoglycan: transfers peptidoglycan precursor phospho-MurNAc-pentapeptide from UDP-MurNAc-pentapeptide onto the lipid carrier undecaprenyl phosphate, yielding undecaprenyl-pyrophosphoryl-MurNAc-pentapeptide, known as lipid I. This is Phospho-N-acetylmuramoyl-pentapeptide-transferase from Desulforapulum autotrophicum (strain ATCC 43914 / DSM 3382 / VKM B-1955 / HRM2) (Desulfobacterium autotrophicum).